Reading from the N-terminus, the 505-residue chain is Peroxisome proliferator-activated receptor gamma (505 aa).

O-linked (GlcNAc) threonine glycosylation is present at Thr-84. A Phosphoserine; by MAPK modification is found at Ser-112. The nuclear receptor DNA-binding region spans 136 to 210 (AIECRVCGDK…VGMSHNAIRF (75 aa)). 2 NR C4-type zinc fingers span residues 139–159 (CRVC…CEGC) and 176–198 (CDLN…FQKC). Positions 205–280 (HNAIRFGRMP…DKSPFVIYDM (76 aa)) are interaction with FAM120B. An NR LBD domain is found at 238–503 (DLRALAKHLY…HPLLQEIYKD (266 aa)). Residue Lys-252 forms a Glycyl lysine isopeptide (Lys-Gly) (interchain with G-Cter in ubiquitin) linkage. Residues 495-503 (PLLQEIYKD) carry the 9aaTAD motif.

This sequence belongs to the nuclear hormone receptor family. NR1 subfamily. In terms of assembly, interacts with FOXO1 (acetylated form). Heterodimer with other nuclear receptors, such as RXRA. The heterodimer with the retinoic acid receptor RXRA is called adipocyte-specific transcription factor ARF6. Interacts with NCOA6 coactivator, leading to a strong increase in transcription of target genes. Interacts with coactivator PPARBP, leading to a mild increase in transcription of target genes. Interacts with NOCA7 in a ligand-inducible manner. Interacts with NCOA1 and NCOA2 LXXLL motifs. Interacts with ASXL1, ASXL2, DNTTIP2, FAM120B, MAP2K1/MEK1, NR0B2, PDPK1, PRDM16, PRMT2 and TGFB1I1. Interacts (when activated by agonist) with PPP5C. Interacts with HELZ2 and THRAP3; the interaction stimulates the transcriptional activity of PPARG. Interacts with PER2, the interaction is ligand dependent and blocks PPARG recruitment to target promoters. Interacts with NOCT. Interacts with ACTN4. Interacts (when in the liganded conformation) with GPS2. Interacts with CRY1 and CRY2 in a ligand-dependent manner. In the absence of hormonal ligand, interacts with TACC1. In macrophages, interacts with PAQR3 and STUB1; the interactions promote PPARG poylubiquitination and STUB1-mediated degradation. O-GlcNAcylation at Thr-84 reduces transcriptional activity in adipocytes. Post-translationally, phosphorylated at basal conditions and dephosphorylated when treated with the ligand. May be dephosphorylated by PPP5C. The phosphorylated form may be inactive and dephosphorylation induces adipogenic activity. In terms of processing, ubiquitinated by E3 ubiquitin-protein ligase complex containing FBXO9; leading to proteasomal degradation. Ubiquitinated at Lys-252 by TRIM55 leading to proteasomal degradation. Ubiquitinated by E3 ubiquitin-protein ligase STUB1/CHIP; leading to proteasomal degradation. As to expression, highest expression in adipose tissue. Lower in liver, heart, kidney, stomach, duodenum and colon.

The protein resides in the nucleus. It localises to the cytoplasm. With respect to regulation, PDPK1 activates its transcriptional activity independently of its kinase activity. In terms of biological role, nuclear receptor that binds peroxisome proliferators such as hypolipidemic drugs and fatty acids. Once activated by a ligand, the nuclear receptor binds to DNA specific PPAR response elements (PPRE) and modulates the transcription of its target genes, such as acyl-CoA oxidase. It therefore controls the peroxisomal beta-oxidation pathway of fatty acids. Key regulator of adipocyte differentiation and glucose homeostasis. ARF6 acts as a key regulator of the tissue-specific adipocyte P2 (aP2) enhancer. Acts as a critical regulator of gut homeostasis by suppressing NF-kappa-B-mediated pro-inflammatory responses. Plays a role in the regulation of cardiovascular circadian rhythms by regulating the transcription of BMAL1 in the blood vessels. The protein is Peroxisome proliferator-activated receptor gamma (PPARG) of Macaca mulatta (Rhesus macaque).